The sequence spans 231 residues: Large ribosomal subunit protein uL1 (231 aa).

The protein belongs to the universal ribosomal protein uL1 family. As to quaternary structure, part of the 50S ribosomal subunit.

In terms of biological role, binds directly to 23S rRNA. The L1 stalk is quite mobile in the ribosome, and is involved in E site tRNA release. Its function is as follows. Protein L1 is also a translational repressor protein, it controls the translation of the L11 operon by binding to its mRNA. This is Large ribosomal subunit protein uL1 from Francisella tularensis subsp. tularensis (strain FSC 198).